Consider the following 156-residue polypeptide: Deoxyuridine 5'-triphosphate nucleotidohydrolase (156 aa).

Substrate is bound by residues R76–G78, N89, T93–D95, and K103.

It belongs to the dUTPase family. Mg(2+) is required as a cofactor.

The enzyme catalyses dUTP + H2O = dUMP + diphosphate + H(+). Its pathway is pyrimidine metabolism; dUMP biosynthesis; dUMP from dCTP (dUTP route): step 2/2. This enzyme is involved in nucleotide metabolism: it produces dUMP, the immediate precursor of thymidine nucleotides and it decreases the intracellular concentration of dUTP so that uracil cannot be incorporated into DNA. The polypeptide is Deoxyuridine 5'-triphosphate nucleotidohydrolase (Rhizobium etli (strain ATCC 51251 / DSM 11541 / JCM 21823 / NBRC 15573 / CFN 42)).